Here is a 545-residue protein sequence, read N- to C-terminus: CTP synthase (545 aa).

The segment at 1–266 is amidoligase domain; the sequence is MTTNYIFVTG…DDLVCARFGI (266 aa). Position 14 (Ser14) interacts with CTP. Residue Ser14 coordinates UTP. ATP-binding positions include 15-20 and Asp72; that span reads SLGKGI. Asp72 and Glu140 together coordinate Mg(2+). Residues 147–149, 187–192, and Lys223 each bind CTP; these read DIE and KTKPTQ. Residues 187–192 and Lys223 each bind UTP; that span reads KTKPTQ. 239–241 provides a ligand contact to ATP; sequence KDV. A Glutamine amidotransferase type-1 domain is found at 291–542; it reads TIGMVGKYTE…VKAAGQFQRG (252 aa). Position 352 (Gly352) interacts with L-glutamine. Cys379 functions as the Nucleophile; for glutamine hydrolysis in the catalytic mechanism. L-glutamine is bound by residues 380 to 383, Glu403, and Arg470; that span reads LGMQ. Catalysis depends on residues His515 and Glu517.

This sequence belongs to the CTP synthase family. In terms of assembly, homotetramer.

It catalyses the reaction UTP + L-glutamine + ATP + H2O = CTP + L-glutamate + ADP + phosphate + 2 H(+). The enzyme catalyses L-glutamine + H2O = L-glutamate + NH4(+). It carries out the reaction UTP + NH4(+) + ATP = CTP + ADP + phosphate + 2 H(+). It participates in pyrimidine metabolism; CTP biosynthesis via de novo pathway; CTP from UDP: step 2/2. With respect to regulation, allosterically activated by GTP, when glutamine is the substrate; GTP has no effect on the reaction when ammonia is the substrate. The allosteric effector GTP functions by stabilizing the protein conformation that binds the tetrahedral intermediate(s) formed during glutamine hydrolysis. Inhibited by the product CTP, via allosteric rather than competitive inhibition. Its function is as follows. Catalyzes the ATP-dependent amination of UTP to CTP with either L-glutamine or ammonia as the source of nitrogen. Regulates intracellular CTP levels through interactions with the four ribonucleotide triphosphates. The sequence is that of CTP synthase from Vibrio cholerae serotype O1 (strain ATCC 39541 / Classical Ogawa 395 / O395).